The sequence spans 507 residues: uncharacterized protein (507 aa).

12 helical membrane-spanning segments follow: residues 46 to 66 (WIVLLAVALLNNTNTMSWIGY), 83 to 103 (AWLSMVYMMCTIPVGMFAMWA), 112 to 132 (AVLIAGWANGIGAVIRVISSL), 141 to 161 (FPICMTGQGIAAIAYPFIMFL), 181 to 201 (IGVMSNPLGVLMANLISPAIV), 207 to 227 (VIWLNIFTCVPSLIAMLIATF), 263 to 283 (IILLIVMGGGIGMFNCLYTVM), 299 to 319 (VCAALMIVGGVFGAAASSIFV), 328 to 348 (TLKIALGAAVIFGLIFLQLTL), 354 to 374 (VILGVTCLLFGVLGLATYPIG), 389 to 409 (TSTGLIVLSGQIQSVIYVFIM), and 442 to 462 (MSIMIFSLLATLLVLTLVVLF). The segment covering 477–493 (ATADKAKELSNQNKDRI) has biased composition (basic and acidic residues). The disordered stretch occupies residues 477 to 507 (ATADKAKELSNQNKDRITLQAESAVEPLQKK).

The protein resides in the membrane. This is an uncharacterized protein from Caenorhabditis elegans.